The following is a 131-amino-acid chain: Large ribosomal subunit protein bL19 (131 aa).

This sequence belongs to the bacterial ribosomal protein bL19 family.

Its function is as follows. This protein is located at the 30S-50S ribosomal subunit interface and may play a role in the structure and function of the aminoacyl-tRNA binding site. The polypeptide is Large ribosomal subunit protein bL19 (Afipia carboxidovorans (strain ATCC 49405 / DSM 1227 / KCTC 32145 / OM5) (Oligotropha carboxidovorans)).